A 354-amino-acid polypeptide reads, in one-letter code: Probable cinnamyl alcohol dehydrogenase 1 (354 aa).

C47 contacts Zn(2+). Residue S49 participates in NADP(+) binding. Zn(2+) contacts are provided by H69, E70, C100, C103, C106, C114, and C163. Residues T167, 188–193, 211–216, T251, G275, and 296–298 contribute to the NADP(+) site; these read GLGGVG, SSSDKK, and SFI.

The protein belongs to the zinc-containing alcohol dehydrogenase family. As to quaternary structure, homodimer. Zn(2+) is required as a cofactor.

It catalyses the reaction (E)-cinnamyl alcohol + NADP(+) = (E)-cinnamaldehyde + NADPH + H(+). The catalysed reaction is (E)-coniferol + NADP(+) = (E)-coniferaldehyde + NADPH + H(+). It carries out the reaction (E)-sinapyl alcohol + NADP(+) = (E)-sinapaldehyde + NADPH + H(+). The enzyme catalyses (E)-4-coumaroyl alcohol + NADP(+) = (E)-4-coumaraldehyde + NADPH + H(+). It catalyses the reaction (E)-caffeyl alcohol + NADP(+) = (E)-caffeyl aldehyde + NADPH + H(+). Its pathway is aromatic compound metabolism; phenylpropanoid biosynthesis. Involved in lignin biosynthesis. Catalyzes the final step specific for the production of lignin monomers. Catalyzes the NADPH-dependent reduction of coniferaldehyde, 5-hydroxyconiferaldehyde, sinapaldehyde, 4-coumaraldehyde and caffeyl aldehyde to their respective alcohols. This is Probable cinnamyl alcohol dehydrogenase 1 (CAD1) from Eucalyptus gunnii (Cider gum).